We begin with the raw amino-acid sequence, 457 residues long: Oxygen-independent coproporphyrinogen III oxidase (457 aa).

The region spanning 47–280 (RYPERPLSLY…QETIVSLTQA (234 aa)) is the Radical SAM core domain. Tyr-56 is an S-adenosyl-L-methionine binding site. The [4Fe-4S] cluster site is built by Cys-62 and Cys-66. Phe-68 provides a ligand contact to S-adenosyl-L-methionine. Cys-69 provides a ligand contact to [4Fe-4S] cluster. S-adenosyl-L-methionine is bound by residues Gly-112, 113-114 (GT), Glu-145, Gln-172, Arg-184, Asp-209, Ala-243, and Ile-329.

The protein belongs to the anaerobic coproporphyrinogen-III oxidase family. As to quaternary structure, monomer. It depends on [4Fe-4S] cluster as a cofactor.

Its subcellular location is the cytoplasm. The enzyme catalyses coproporphyrinogen III + 2 S-adenosyl-L-methionine = protoporphyrinogen IX + 2 5'-deoxyadenosine + 2 L-methionine + 2 CO2. It participates in porphyrin-containing compound metabolism; protoporphyrin-IX biosynthesis; protoporphyrinogen-IX from coproporphyrinogen-III (AdoMet route): step 1/1. Involved in the heme biosynthesis. Catalyzes the anaerobic oxidative decarboxylation of propionate groups of rings A and B of coproporphyrinogen III to yield the vinyl groups in protoporphyrinogen IX. The polypeptide is Oxygen-independent coproporphyrinogen III oxidase (hemN) (Salmonella typhi).